We begin with the raw amino-acid sequence, 88 residues long: Small ribosomal subunit protein uS19 (88 aa).

Belongs to the universal ribosomal protein uS19 family.

Functionally, protein S19 forms a complex with S13 that binds strongly to the 16S ribosomal RNA. This Mycoplasma capricolum subsp. capricolum (strain California kid / ATCC 27343 / NCTC 10154) protein is Small ribosomal subunit protein uS19 (rpsS).